The following is a 198-amino-acid chain: Dual specificity protein phosphatase 13B (198 aa).

In terms of domain architecture, Tyrosine-protein phosphatase spans 45–193; that stretch reads HINEVWPNLF…LQVLDNRLRR (149 aa). Cys-138 (phosphocysteine intermediate) is an active-site residue.

It belongs to the protein-tyrosine phosphatase family. Non-receptor class dual specificity subfamily. As to expression, most abundantly expressed in the testis.

The enzyme catalyses O-phospho-L-tyrosyl-[protein] + H2O = L-tyrosyl-[protein] + phosphate. It catalyses the reaction O-phospho-L-seryl-[protein] + H2O = L-seryl-[protein] + phosphate. It carries out the reaction O-phospho-L-threonyl-[protein] + H2O = L-threonyl-[protein] + phosphate. In terms of biological role, dual specificity phosphatase that dephosphorylates MAPK8/JNK and MAPK14/p38, but not MAPK1/ERK2, in vitro. Exhibits intrinsic phosphatase activity towards both phospho-seryl/threonyl and -tyrosyl residues, with similar specific activities in vitro. The protein is Dual specificity protein phosphatase 13B of Mus musculus (Mouse).